We begin with the raw amino-acid sequence, 368 residues long: 3-dehydroquinate synthase (368 aa).

NAD(+) is bound by residues 71 to 76, 105 to 109, 129 to 130, Lys-142, Lys-151, and 169 to 172; these read DGEAFK, GVVGD, TT, and TLRT. Residues Glu-184, His-247, and His-264 each contribute to the Zn(2+) site.

Belongs to the sugar phosphate cyclases superfamily. Dehydroquinate synthase family. Co(2+) is required as a cofactor. Zn(2+) serves as cofactor. It depends on NAD(+) as a cofactor.

Its subcellular location is the cytoplasm. It carries out the reaction 7-phospho-2-dehydro-3-deoxy-D-arabino-heptonate = 3-dehydroquinate + phosphate. The protein operates within metabolic intermediate biosynthesis; chorismate biosynthesis; chorismate from D-erythrose 4-phosphate and phosphoenolpyruvate: step 2/7. Functionally, catalyzes the conversion of 3-deoxy-D-arabino-heptulosonate 7-phosphate (DAHP) to dehydroquinate (DHQ). The polypeptide is 3-dehydroquinate synthase (Cupriavidus taiwanensis (strain DSM 17343 / BCRC 17206 / CCUG 44338 / CIP 107171 / LMG 19424 / R1) (Ralstonia taiwanensis (strain LMG 19424))).